The sequence spans 1465 residues: DNA polymerase III PolC-type (1465 aa).

One can recognise an Exonuclease domain in the interval 427–583; the sequence is YVVFDVETTG…YDAEATGRLL (157 aa).

The protein belongs to the DNA polymerase type-C family. PolC subfamily.

It is found in the cytoplasm. It carries out the reaction DNA(n) + a 2'-deoxyribonucleoside 5'-triphosphate = DNA(n+1) + diphosphate. Its function is as follows. Required for replicative DNA synthesis. This DNA polymerase also exhibits 3' to 5' exonuclease activity. The chain is DNA polymerase III PolC-type from Streptococcus pyogenes serotype M4 (strain MGAS10750).